Here is a 326-residue protein sequence, read N- to C-terminus: N-acetyl-gamma-glutamyl-phosphate reductase (326 aa).

The active site involves cysteine 155.

This sequence belongs to the NAGSA dehydrogenase family. Type 1 subfamily.

The protein localises to the cytoplasm. The catalysed reaction is N-acetyl-L-glutamate 5-semialdehyde + phosphate + NADP(+) = N-acetyl-L-glutamyl 5-phosphate + NADPH + H(+). The protein operates within amino-acid biosynthesis; L-arginine biosynthesis; N(2)-acetyl-L-ornithine from L-glutamate: step 3/4. Catalyzes the NADPH-dependent reduction of N-acetyl-5-glutamyl phosphate to yield N-acetyl-L-glutamate 5-semialdehyde. This is N-acetyl-gamma-glutamyl-phosphate reductase from Shewanella loihica (strain ATCC BAA-1088 / PV-4).